The chain runs to 325 residues: tRNA(Ile)-lysidine synthase (325 aa).

34-39 (SGGADS) provides a ligand contact to ATP.

This sequence belongs to the tRNA(Ile)-lysidine synthase family.

It localises to the cytoplasm. The catalysed reaction is cytidine(34) in tRNA(Ile2) + L-lysine + ATP = lysidine(34) in tRNA(Ile2) + AMP + diphosphate + H(+). Functionally, ligates lysine onto the cytidine present at position 34 of the AUA codon-specific tRNA(Ile) that contains the anticodon CAU, in an ATP-dependent manner. Cytidine is converted to lysidine, thus changing the amino acid specificity of the tRNA from methionine to isoleucine. This is tRNA(Ile)-lysidine synthase from Rhodococcus jostii (strain RHA1).